The chain runs to 510 residues: NAD(P)H-quinone oxidoreductase subunit 2 B, chloroplastic (510 aa).

Transmembrane regions (helical) follow at residues 24-44 (LLLF…GLIL), 57-77 (ISWF…VLLF), 99-119 (IFQF…VEYI), 124-144 (MAIT…MFLC), 149-169 (LITI…LSGY), 183-203 (YLLM…WLYG), 227-247 (PGIS…LSLA), 295-315 (WHLL…LIAI), 323-343 (MLAY…IVGD), 354-374 (YMLF…SFGL), 395-415 (ALSL…AGFF), 418-438 (LYLF…IGLL), and 482-502 (LSMI…NPII).

The protein belongs to the complex I subunit 2 family. In terms of assembly, NDH is composed of at least 16 different subunits, 5 of which are encoded in the nucleus.

The protein localises to the plastid. Its subcellular location is the chloroplast thylakoid membrane. It catalyses the reaction a plastoquinone + NADH + (n+1) H(+)(in) = a plastoquinol + NAD(+) + n H(+)(out). The enzyme catalyses a plastoquinone + NADPH + (n+1) H(+)(in) = a plastoquinol + NADP(+) + n H(+)(out). NDH shuttles electrons from NAD(P)H:plastoquinone, via FMN and iron-sulfur (Fe-S) centers, to quinones in the photosynthetic chain and possibly in a chloroplast respiratory chain. The immediate electron acceptor for the enzyme in this species is believed to be plastoquinone. Couples the redox reaction to proton translocation, and thus conserves the redox energy in a proton gradient. The chain is NAD(P)H-quinone oxidoreductase subunit 2 B, chloroplastic from Lotus japonicus (Lotus corniculatus var. japonicus).